Consider the following 207-residue polypeptide: Probable HTH-type transcriptional regulator YttP (207 aa).

The region spanning 3 to 63 (VSTKDKIIES…HLVSEFYEGY (61 aa)) is the HTH tetR-type domain. Residues 26-45 (SVREIAKSADVNVAHISYYF) constitute a DNA-binding region (H-T-H motif).

This chain is Probable HTH-type transcriptional regulator YttP (yttP), found in Bacillus subtilis (strain 168).